Here is a 555-residue protein sequence, read N- to C-terminus: Dihydroxy-acid dehydratase (555 aa).

Asp-78 serves as a coordination point for Mg(2+). Residue Cys-119 participates in [2Fe-2S] cluster binding. Mg(2+) is bound by residues Asp-120 and Lys-121. Lys-121 carries the N6-carboxylysine modification. [2Fe-2S] cluster is bound at residue Cys-191. Mg(2+) is bound at residue Glu-444. Ser-470 functions as the Proton acceptor in the catalytic mechanism.

This sequence belongs to the IlvD/Edd family. Homodimer. Requires [2Fe-2S] cluster as cofactor. Mg(2+) serves as cofactor.

The catalysed reaction is (2R)-2,3-dihydroxy-3-methylbutanoate = 3-methyl-2-oxobutanoate + H2O. It catalyses the reaction (2R,3R)-2,3-dihydroxy-3-methylpentanoate = (S)-3-methyl-2-oxopentanoate + H2O. It participates in amino-acid biosynthesis; L-isoleucine biosynthesis; L-isoleucine from 2-oxobutanoate: step 3/4. The protein operates within amino-acid biosynthesis; L-valine biosynthesis; L-valine from pyruvate: step 3/4. In terms of biological role, functions in the biosynthesis of branched-chain amino acids. Catalyzes the dehydration of (2R,3R)-2,3-dihydroxy-3-methylpentanoate (2,3-dihydroxy-3-methylvalerate) into 2-oxo-3-methylpentanoate (2-oxo-3-methylvalerate) and of (2R)-2,3-dihydroxy-3-methylbutanoate (2,3-dihydroxyisovalerate) into 2-oxo-3-methylbutanoate (2-oxoisovalerate), the penultimate precursor to L-isoleucine and L-valine, respectively. This is Dihydroxy-acid dehydratase from Maridesulfovibrio salexigens (strain ATCC 14822 / DSM 2638 / NCIMB 8403 / VKM B-1763) (Desulfovibrio salexigens).